The primary structure comprises 292 residues: Probable vesicular-fusion protein sec17 homolog (292 aa).

This sequence belongs to the SNAP family.

It is found in the membrane. In terms of biological role, required for vesicular transport between the endoplasmic reticulum and the Golgi apparatus. This chain is Probable vesicular-fusion protein sec17 homolog, found in Neurospora crassa (strain ATCC 24698 / 74-OR23-1A / CBS 708.71 / DSM 1257 / FGSC 987).